Reading from the N-terminus, the 319-residue chain is Ribonucleoside-diphosphate reductase small chain (319 aa).

Asp-70, Glu-101, and His-104 together coordinate Fe cation. Residue Tyr-108 is part of the active site. Residues Glu-163, Glu-197, and His-200 each contribute to the Fe cation site. Residues 313–319 (FSLDVDF) are interaction with R1.

The protein belongs to the ribonucleoside diphosphate reductase small chain family. In terms of assembly, interacts with RNR1/OPG080 subunit. Can interact with host RNR1 supunit. Fe cation serves as cofactor.

It carries out the reaction a 2'-deoxyribonucleoside 5'-diphosphate + [thioredoxin]-disulfide + H2O = a ribonucleoside 5'-diphosphate + [thioredoxin]-dithiol. Ribonucleoside-diphosphate reductase holoenzyme provides the precursors necessary for viral DNA synthesis. Allows virus growth in non-dividing cells. Catalyzes the biosynthesis of deoxyribonucleotides from the corresponding ribonucleotides. This Vaccinia virus (strain L-IVP) (VACV) protein is Ribonucleoside-diphosphate reductase small chain (OPG048).